We begin with the raw amino-acid sequence, 196 residues long: Carnitine operon protein CaiE (196 aa).

A disordered region spans residues 173-196 (TQPLRQMEENRPRLQGTTDVTPKR). Positions 187–196 (QGTTDVTPKR) are enriched in polar residues.

It belongs to the transferase hexapeptide repeat family.

It functions in the pathway amine and polyamine metabolism; carnitine metabolism. Overproduction of CaiE stimulates the activity of CaiB and CaiD. The protein is Carnitine operon protein CaiE of Escherichia coli O139:H28 (strain E24377A / ETEC).